The following is a 130-amino-acid chain: Annexin A1 (130 aa).

An Isoglutamyl lysine isopeptide (Gln-Lys) (interchain with K-?) cross-link involves residue Gln19. Phosphoserine; by PKC is present on Ser24. Annexin repeat units lie at residues 37–108 (FDPS…ALLK) and 109–130 (TPAQ…TDRR). Residues Gly54, Val55, Glu57, Lys92, Leu95, Glu100, Met122, Gly124, Gly126, Thr127, and Arg130 each contribute to the Ca(2+) site.

The protein belongs to the annexin family.

The protein localises to the nucleus. The protein resides in the cytoplasm. It localises to the cell projection. It is found in the cilium. Its subcellular location is the basolateral cell membrane. The protein localises to the lateral cell membrane. The protein resides in the cell membrane. It localises to the apical cell membrane. It is found in the membrane. Its subcellular location is the early endosome. The protein localises to the cytoplasmic vesicle membrane. The protein resides in the endosome membrane. It localises to the secreted. It is found in the extracellular space. Its subcellular location is the extracellular exosome. The protein localises to the cytoplasmic vesicle. The protein resides in the secretory vesicle lumen. It localises to the phagocytic cup. In terms of biological role, plays important roles in the innate immune response as effector of glucocorticoid-mediated responses and regulator of the inflammatory process. Has anti-inflammatory activity. Plays a role in glucocorticoid-mediated down-regulation of the early phase of the inflammatory response. Promotes resolution of inflammation and wound healing. Functions at least in part by activating the formyl peptide receptors and downstream signaling cascades. Promotes chemotaxis of granulocytes and monocytes via activation of the formyl peptide receptors. Contributes to the adaptive immune response by enhancing signaling cascades that are triggered by T-cell activation, regulates differentiation and proliferation of activated T-cells. Promotes the differentiation of T-cells into Th1 cells and negatively regulates differentiation into Th2 cells. Has no effect on unstimulated T-cells. Promotes rearrangement of the actin cytoskeleton, cell polarization and cell migration. Negatively regulates hormone exocytosis via activation of the formyl peptide receptors and reorganization of the actin cytoskeleton. Has high affinity for Ca(2+) and can bind up to eight Ca(2+) ions. Displays Ca(2+)-dependent binding to phospholipid membranes. Plays a role in the formation of phagocytic cups and phagosomes. Plays a role in phagocytosis by mediating the Ca(2+)-dependent interaction between phagosomes and the actin cytoskeleton. In Gallus gallus (Chicken), this protein is Annexin A1 (ANXA1).